The following is a 321-amino-acid chain: Lipoyl synthase (321 aa).

[4Fe-4S] cluster-binding residues include cysteine 68, cysteine 73, cysteine 79, cysteine 94, cysteine 98, cysteine 101, and serine 308. The 218-residue stretch at 80 to 297 (FNHGTATFMI…KELAESIGFT (218 aa)) folds into the Radical SAM core domain.

Belongs to the radical SAM superfamily. Lipoyl synthase family. [4Fe-4S] cluster serves as cofactor.

It localises to the cytoplasm. The enzyme catalyses [[Fe-S] cluster scaffold protein carrying a second [4Fe-4S](2+) cluster] + N(6)-octanoyl-L-lysyl-[protein] + 2 oxidized [2Fe-2S]-[ferredoxin] + 2 S-adenosyl-L-methionine + 4 H(+) = [[Fe-S] cluster scaffold protein] + N(6)-[(R)-dihydrolipoyl]-L-lysyl-[protein] + 4 Fe(3+) + 2 hydrogen sulfide + 2 5'-deoxyadenosine + 2 L-methionine + 2 reduced [2Fe-2S]-[ferredoxin]. It functions in the pathway protein modification; protein lipoylation via endogenous pathway; protein N(6)-(lipoyl)lysine from octanoyl-[acyl-carrier-protein]: step 2/2. In terms of biological role, catalyzes the radical-mediated insertion of two sulfur atoms into the C-6 and C-8 positions of the octanoyl moiety bound to the lipoyl domains of lipoate-dependent enzymes, thereby converting the octanoylated domains into lipoylated derivatives. The protein is Lipoyl synthase of Shewanella halifaxensis (strain HAW-EB4).